Consider the following 127-residue polypeptide: MSELRFTADHEWLRAEADGSVTVGITPYAQESLGDVVFVQLPELQAYAQHAEVSVVESVKAASSINMPLDGEVVEVNAVLDATPERVNEDALGAGWFFRFIPQDAYAIHGLLDQDAYDRLIKANAQA.

The region spanning Ser20–Ile101 is the Lipoyl-binding domain. Position 60 is an N6-lipoyllysine (Lys60).

It belongs to the GcvH family. As to quaternary structure, the glycine cleavage system is composed of four proteins: P, T, L and H. (R)-lipoate serves as cofactor.

Its function is as follows. The glycine cleavage system catalyzes the degradation of glycine. The H protein shuttles the methylamine group of glycine from the P protein to the T protein. The sequence is that of Glycine cleavage system H protein 1 from Pseudomonas syringae pv. tomato (strain ATCC BAA-871 / DC3000).